A 422-amino-acid polypeptide reads, in one-letter code: Serine protease HTRA2, mitochondrial (422 aa).

A mitochondrion-targeting transit peptide spans 1 to 17 (MALRGSHRLEVIFKRCI). The propeptide occupies 18 to 74 (ASPVLHSQAGNRRSSQLAIKGVDPNSNGNSGQYQQNGEHKEKGWRRLVRFFVPFSLG). The tract at residues 28-55 (NRRSSQLAIKGVDPNSNGNSGQYQQNGE) is disordered. The segment covering 42–53 (NSNGNSGQYQQN) has biased composition (low complexity). A helical membrane pass occupies residues 64-82 (LVRFFVPFSLGAAVSAAII). 2 consecutive short sequence motifs (IAP-binding) follow at residues 75 to 78 (AAVS) and 94 to 97 (SKMT). Residues 139–302 (SNGSGFIIEQ…IPIDYVKVFL (164 aa)) form a serine protease region. Residues His-157, Asp-189, and Ser-266 each act as charge relay system in the active site. In terms of domain architecture, PDZ spans 325-410 (MGITMLTLTP…TLDIVILRGV (86 aa)).

It belongs to the peptidase S1C family. Interacts with th/DIAP1 (via BIR 2 domain).

It is found in the mitochondrion intermembrane space. Its subcellular location is the mitochondrion membrane. The catalysed reaction is Cleavage of non-polar aliphatic amino-acids at the P1 position, with a preference for Val, Ile and Met. At the P2 and P3 positions, Arg is selected most strongly with a secondary preference for other hydrophilic residues.. In terms of biological role, serine protease that shows proteolytic activity against a non-specific substrate beta-casein. Promotes or induces cell death either by direct binding to and inhibition of BIRC proteins (also called inhibitor of apoptosis proteins, IAPs), leading to an increase in caspase activity, or by a BIRC inhibition-independent, caspase-independent and serine protease activity-dependent mechanism. Can antagonize antiapoptotic activity of th/Diap1 by directly inducing the degradation of th/Diap1. The chain is Serine protease HTRA2, mitochondrial from Drosophila sechellia (Fruit fly).